The sequence spans 230 residues: RING finger protein 141 (230 aa).

Glycine 2 is lipidated: N-myristoyl glycine. An RING-type zinc finger spans residues 155 to 192 (CCICMDGRADLILPCAHSFCQKCIDKWSDRHRNCPICR).

In terms of tissue distribution, isoform 1 is testis-specific. Isoform 2 is expressed in heart, brain, skeletal muscle, kidney, pancreas, lung, liver and testis. Isoform 3 is expressed in heart, liver, and kidney.

The protein resides in the membrane. Functionally, may be involved in spermatogenesis. The polypeptide is RING finger protein 141 (Rnf141) (Mus musculus (Mouse)).